We begin with the raw amino-acid sequence, 453 residues long: tRNA modification GTPase MnmE (453 aa).

Positions 22, 79, and 119 each coordinate (6S)-5-formyl-5,6,7,8-tetrahydrofolate. Positions 215 to 376 constitute a TrmE-type G domain; it reads GMKVVIAGRP…LKLHLKSLMG (162 aa). N225 is a K(+) binding site. Residues 225-230, 244-250, 269-272, and 334-337 each bind GTP; these read NAGKSS, TEIAGTT, DTAG, and NKAD. S229 is a binding site for Mg(2+). K(+) is bound by residues T244, I246, and T249. T250 provides a ligand contact to Mg(2+). K453 provides a ligand contact to (6S)-5-formyl-5,6,7,8-tetrahydrofolate.

This sequence belongs to the TRAFAC class TrmE-Era-EngA-EngB-Septin-like GTPase superfamily. TrmE GTPase family. In terms of assembly, homodimer. Heterotetramer of two MnmE and two MnmG subunits. K(+) serves as cofactor.

The protein resides in the cytoplasm. Functionally, exhibits a very high intrinsic GTPase hydrolysis rate. Involved in the addition of a carboxymethylaminomethyl (cmnm) group at the wobble position (U34) of certain tRNAs, forming tRNA-cmnm(5)s(2)U34. This is tRNA modification GTPase MnmE from Shewanella putrefaciens (strain CN-32 / ATCC BAA-453).